Here is a 630-residue protein sequence, read N- to C-terminus: Alpha-1,4-glucan:maltose-1-phosphate maltosyltransferase (630 aa).

3 residues coordinate alpha-maltose 1-phosphate: Arg-234, Gln-294, and Asp-329. The active-site Nucleophile is Asp-365. Asn-366 is an alpha-maltose 1-phosphate binding site. The Proton donor role is filled by Glu-394. 504-505 (KY) contacts alpha-maltose 1-phosphate.

Belongs to the glycosyl hydrolase 13 family. GlgE subfamily. In terms of assembly, homodimer.

It carries out the reaction alpha-maltose 1-phosphate + [(1-&gt;4)-alpha-D-glucosyl](n) = [(1-&gt;4)-alpha-D-glucosyl](n+2) + phosphate. Functionally, maltosyltransferase that uses maltose 1-phosphate (M1P) as the sugar donor to elongate linear or branched alpha-(1-&gt;4)-glucans. Is involved in a branched alpha-glucan biosynthetic pathway from trehalose, together with TreS, Mak and GlgB. The chain is Alpha-1,4-glucan:maltose-1-phosphate maltosyltransferase from Picrophilus torridus (strain ATCC 700027 / DSM 9790 / JCM 10055 / NBRC 100828 / KAW 2/3).